Reading from the N-terminus, the 427-residue chain is Peptidyl-prolyl cis-trans isomerase sig-7 (427 aa).

Residues 6–161 (ETTLGDLIID…KDIRISHTIV (156 aa)) form the PPIase cyclophilin-type domain. A coiled-coil region spans residues 195–227 (DEKEDEDEGKTAEEIAEELQQREMAEQAQILEM). An RRM domain is found at 241-319 (NVLFVCKLNP…RRIHVDFSQS (79 aa)). A compositionally biased stretch (polar residues) spans 322–334 (QNYKYKPKSQQQE). Residues 322–427 (QNYKYKPKSQ…RSPDRRRDRR (106 aa)) form a disordered region. The segment covering 351-370 (SHQRSPSPRRRRSPSPKKDK) has biased composition (basic residues). Basic and acidic residues predominate over residues 384–427 (SSDNHRDRDRSYRDNNRDRRDNHRDSDRDRRRHDRSPDRRRDRR).

This sequence belongs to the cyclophilin-type PPIase family. PPIL4 subfamily. As to quaternary structure, interacts with ama-1, the catalytic subunit of the RNA polymerase II (RNA pol II) complex. In terms of tissue distribution, ubiquitous.

The protein resides in the nucleus. It localises to the nucleoplasm. The protein localises to the chromosome. It catalyses the reaction [protein]-peptidylproline (omega=180) = [protein]-peptidylproline (omega=0). Functionally, probable PPIase that accelerates the folding of proteins. It catalyzes the cis-trans isomerization of proline imidic peptide bonds in oligopeptides. Involved in RNA polymerase II (RNA pol II)-mediated transcription elongation, and in primary transcript splicing, including co-transcriptional trans-splicing, in association with the catalytic subunit of the RNA pol II complex ama-1. Also plays a role in the regulation of elongation-dependent phosphorylation of ama-1 to control transcription. Involved in the transcription of several genes during embryogenesis and in particular, of genes related to developmental processes such as gastrulation, and also regulates transcription in germ cells from embryogenesis to adulthood. The chain is Peptidyl-prolyl cis-trans isomerase sig-7 from Caenorhabditis elegans.